Here is a 231-residue protein sequence, read N- to C-terminus: uncharacterized protein (231 aa).

An NADP(+)-binding site is contributed by 10-34 (IITGASSGIGAATAKALEKQGVKVV). Substrate is bound at residue S140. Y153 serves as the catalytic Proton acceptor.

The protein belongs to the short-chain dehydrogenases/reductases (SDR) family.

This is an uncharacterized protein from Staphylococcus haemolyticus (strain JCSC1435).